We begin with the raw amino-acid sequence, 223 residues long: DNA mismatch repair protein MutH (223 aa).

This sequence belongs to the MutH family.

It localises to the cytoplasm. In terms of biological role, sequence-specific endonuclease that cleaves unmethylated GATC sequences. It is involved in DNA mismatch repair. This is DNA mismatch repair protein MutH from Shewanella sp. (strain MR-4).